A 431-amino-acid polypeptide reads, in one-letter code: Adenylosuccinate synthetase (431 aa).

GTP is bound by residues 13 to 19 (GDEGKGK) and 41 to 43 (GHT). The Proton acceptor role is filled by Asp14. 2 residues coordinate Mg(2+): Asp14 and Gly41. IMP is bound by residues 14-17 (DEGK), 39-42 (NAGH), Thr130, Arg144, Gln225, Thr240, and Arg304. His42 acts as the Proton donor in catalysis. 300-306 (ATTGRER) provides a ligand contact to substrate. Residues Arg306, 332–334 (KLD), and 415–417 (STG) contribute to the GTP site.

The protein belongs to the adenylosuccinate synthetase family. In terms of assembly, homodimer. Mg(2+) is required as a cofactor.

Its subcellular location is the cytoplasm. The catalysed reaction is IMP + L-aspartate + GTP = N(6)-(1,2-dicarboxyethyl)-AMP + GDP + phosphate + 2 H(+). Its pathway is purine metabolism; AMP biosynthesis via de novo pathway; AMP from IMP: step 1/2. Plays an important role in the de novo pathway of purine nucleotide biosynthesis. Catalyzes the first committed step in the biosynthesis of AMP from IMP. The sequence is that of Adenylosuccinate synthetase from Colwellia psychrerythraea (strain 34H / ATCC BAA-681) (Vibrio psychroerythus).